The following is a 356-amino-acid chain: Leucoanthocyanidin dioxygenase (356 aa).

Substrate-binding residues include Tyr142 and Lys213. Positions 208–307 (LLLQMKINYY…RISWAVFCEP (100 aa)) constitute a Fe2OG dioxygenase domain. 215–217 (NYY) provides a ligand contact to 2-oxoglutarate. Fe cation is bound at residue His232. Thr233 lines the substrate pocket. Fe cation is bound by residues Asp234 and His288. 298–300 (RIS) provides a ligand contact to 2-oxoglutarate. Substrate is bound by residues Glu306 and Lys341.

The protein belongs to the iron/ascorbate-dependent oxidoreductase family. It depends on L-ascorbate as a cofactor. Requires Fe(2+) as cofactor. As to expression, expressed in young seedlings (at protein level).

The catalysed reaction is a (2R,3S,4S)-leucoanthocyanidin + 2-oxoglutarate + O2 = a 4-H-anthocyanidin with a 3-hydroxy group + succinate + CO2 + 2 H2O. It carries out the reaction (2R,3S,4S)-3,4-leucopelargonidin + 2-oxoglutarate + O2 = (4S)-2,3-dehydroleucopelargonidin + succinate + CO2 + H2O + H(+). It catalyses the reaction (2R,3S,4S)-leucocyanidin + 2-oxoglutarate + O2 = (4S)-2,3-dehydroleucocyanidin + succinate + CO2 + H2O + H(+). It functions in the pathway pigment biosynthesis; anthocyanin biosynthesis. In terms of biological role, involved in anthocyanin and protoanthocyanidin biosynthesis by catalyzing the oxidation of leucoanthocyanidins into anthocyanidins. Possesses low flavonol synthase activity in vitro towards dihydrokaempferol and dihydroquercetin producing kaempferol and quercitin, respectively. The protein is Leucoanthocyanidin dioxygenase (LDOX) of Arabidopsis thaliana (Mouse-ear cress).